We begin with the raw amino-acid sequence, 316 residues long: Transaldolase (316 aa).

Residue K132 is the Schiff-base intermediate with substrate of the active site.

Belongs to the transaldolase family. Type 1 subfamily. Homodimer.

The protein resides in the cytoplasm. The catalysed reaction is D-sedoheptulose 7-phosphate + D-glyceraldehyde 3-phosphate = D-erythrose 4-phosphate + beta-D-fructose 6-phosphate. It participates in carbohydrate degradation; pentose phosphate pathway; D-glyceraldehyde 3-phosphate and beta-D-fructose 6-phosphate from D-ribose 5-phosphate and D-xylulose 5-phosphate (non-oxidative stage): step 2/3. In terms of biological role, transaldolase is important for the balance of metabolites in the pentose-phosphate pathway. The protein is Transaldolase of Aliivibrio fischeri (strain MJ11) (Vibrio fischeri).